A 624-amino-acid polypeptide reads, in one-letter code: MNMSSSSRKLSRLFNIVTQNQKSPVLLSSDQEAARRITACLVEKSTIGKLQSNPSLLFNLNSNVTRLVLSEPTLPTQSCIDFFKLLREFESNLKPDLTAVVTLSHRLYSNRRFNEMRSLLNSVVNDGFYKRPVEELGSAMVDCDISEEKFEFFEKFFDLVFRVYVDNGMFEEGLRVFDYMVKKGLSIDERSCIVFLVAAKKRRRIDLCLEIFRRMVDSGVKITVYSLTIVVEGLCRRGEVEKSKKLIKEFSVKGIKPEAYTYNTIINAYVKQRDFSGVEGVLKVMKKDGVVYNKVTYTLLMELSVKNGKMSDAEKLFDEMRERGIESDVHVYTSLISWNCRKGNMKRAFLLFDELTEKGLSPSSYTYGALIDGVCKVGEMGAAEILMNEMQSKGVNITQVVFNTLIDGYCRKGMVDEASMIYDVMEQKGFQADVFTCNTIASCFNRLKRYDEAKQWLFRMMEGGVKLSTVSYTNLIDVYCKEGNVEEAKRLFVEMSSKGVQPNAITYNVMIYAYCKQGKIKEARKLRANMEANGMDPDSYTYTSLIHGECIADNVDEAMRLFSEMGLKGLDQNSVTYTVMISGLSKAGKSDEAFGLYDEMKRKGYTIDNKVYTALIGSMHSPET.

PPR repeat units lie at residues 153-187 (FEKF…GLSI), 188-222 (DERS…GVKI), 223-257 (TVYS…GIKP), 258-292 (EAYT…GVVY), 293-327 (NKVT…GIES), 328-362 (DVHV…GLSP), 363-397 (SSYT…GVNI), 398-432 (TQVV…GFQA), 433-467 (DVFT…GVKL), 468-502 (STVS…GVQP), 503-537 (NAIT…GMDP), 538-572 (DSYT…GLDQ), and 573-607 (NSVT…GYTI).

The protein belongs to the PPR family. P subfamily.

This is Pentatricopeptide repeat-containing protein At2g32630 from Arabidopsis thaliana (Mouse-ear cress).